A 255-amino-acid polypeptide reads, in one-letter code: Vitamin B12 import ATP-binding protein BtuD (255 aa).

Positions 2–240 constitute an ABC transporter domain; it reads MHVKHIALGS…EGLAEVFQTQ (239 aa). Residue 30 to 37 participates in ATP binding; sequence GPNGSGKS.

The protein belongs to the ABC transporter superfamily. Vitamin B12 importer (TC 3.A.1.13.1) family. As to quaternary structure, the complex is composed of two ATP-binding proteins (BtuD), two transmembrane proteins (BtuC) and a solute-binding protein (BtuF).

The protein resides in the cell inner membrane. The catalysed reaction is an R-cob(III)alamin(out) + ATP + H2O = an R-cob(III)alamin(in) + ADP + phosphate + H(+). Its function is as follows. Part of the ABC transporter complex BtuCDF involved in vitamin B12 import. Responsible for energy coupling to the transport system. This Vibrio campbellii (strain ATCC BAA-1116) protein is Vitamin B12 import ATP-binding protein BtuD.